We begin with the raw amino-acid sequence, 104 residues long: MTKSELIEILTKRQAHLKSDDVDLAVKSLLEMMGGALSGGDRIEIRGFGSFSLHYRPPRCGRNPKTGESVALPGKYVPHFKPGKELRERVASVVPLGECGDITE.

This sequence belongs to the bacterial histone-like protein family. In terms of assembly, heterodimer of an alpha and a beta chain.

Functionally, this protein is one of the two subunits of integration host factor, a specific DNA-binding protein that functions in genetic recombination as well as in transcriptional and translational control. This Xylella fastidiosa (strain M23) protein is Integration host factor subunit beta.